The sequence spans 154 residues: Small heat shock protein IbpB (154 aa).

The sHSP domain occupies G26–A137.

It belongs to the small heat shock protein (HSP20) family. In terms of assembly, homodimer. Forms homomultimers of about 100-150 subunits at optimal growth temperatures. Conformation changes to oligomers at high temperatures or high ionic concentrations. The decrease in size of the multimers is accompanied by an increase in chaperone activity.

It is found in the cytoplasm. Associates with aggregated proteins, together with IbpA, to stabilize and protect them from irreversible denaturation and extensive proteolysis during heat shock and oxidative stress. Aggregated proteins bound to the IbpAB complex are more efficiently refolded and reactivated by the ATP-dependent chaperone systems ClpB and DnaK/DnaJ/GrpE. Its activity is ATP-independent. This is Small heat shock protein IbpB from Yersinia pseudotuberculosis serotype O:1b (strain IP 31758).